We begin with the raw amino-acid sequence, 229 residues long: MATELTWHDVLADEKQQPYFINTLHTVAGERQSGITVYPPQKDVFNAFRFTELGDVKVVILGQDPYHGPGQAHGLAFSVRPGIAPPPSLVNMYKELEASIPGFVRPPHGYLESWARQGVLLLNTVLTVRAGQAHSHASLGWETFTDKVISLINQYREGVVFLLWGSHAQKKGAIIDPLRHHILKAPHPSPLSAHRGFFGCNHFALTNQWLEQHGEKPIDWTPVLPAESE.

Residue Asp64 is the Proton acceptor of the active site.

Belongs to the uracil-DNA glycosylase (UDG) superfamily. UNG family.

It is found in the cytoplasm. It carries out the reaction Hydrolyzes single-stranded DNA or mismatched double-stranded DNA and polynucleotides, releasing free uracil.. Its function is as follows. Excises uracil residues from the DNA which can arise as a result of misincorporation of dUMP residues by DNA polymerase or due to deamination of cytosine. The chain is Uracil-DNA glycosylase from Salmonella arizonae (strain ATCC BAA-731 / CDC346-86 / RSK2980).